The chain runs to 396 residues: Phosphoglycerate kinase (396 aa).

Substrate is bound by residues 21–23, R37, 60–63, R121, and R154; these read DFN and HLGR. Residues K205, G296, E327, and 353–356 each bind ATP; that span reads GGDS.

This sequence belongs to the phosphoglycerate kinase family. In terms of assembly, monomer.

It localises to the cytoplasm. It carries out the reaction (2R)-3-phosphoglycerate + ATP = (2R)-3-phospho-glyceroyl phosphate + ADP. It functions in the pathway carbohydrate degradation; glycolysis; pyruvate from D-glyceraldehyde 3-phosphate: step 2/5. The chain is Phosphoglycerate kinase from Anaeromyxobacter sp. (strain Fw109-5).